The primary structure comprises 88 residues: Small ribosomal subunit protein uS17 (88 aa).

It belongs to the universal ribosomal protein uS17 family. Part of the 30S ribosomal subunit.

Its function is as follows. One of the primary rRNA binding proteins, it binds specifically to the 5'-end of 16S ribosomal RNA. This Ectopseudomonas mendocina (strain ymp) (Pseudomonas mendocina) protein is Small ribosomal subunit protein uS17.